The following is a 355-amino-acid chain: Septin-2B (355 aa).

Residues 33–305 form the Septin-type G domain; it reads KGFEFTLMVV…ENFRSERLKK (273 aa). The tract at residues 43–50 is G1 motif; the sequence is GESGLGKS. GTP contacts are provided by residues 43–50, Thr-77, Gly-103, 182–190, Gly-240, and Arg-255; these read GESGLGKS and KADTLTLRE. Positions 100–103 are G3 motif; sequence DTPG. Positions 181–184 are G4 motif; the sequence is AKAD. Residues 259-269 are important for dimerization; sequence WGVVEVENPEH.

The protein belongs to the TRAFAC class TrmE-Era-EngA-EngB-Septin-like GTPase superfamily. Septin GTPase family. As to quaternary structure, septins polymerize into heterooligomeric protein complexes that form filaments, and associate with cellular membranes, actin filaments and microtubules. GTPase activity is required for filament formation. Can form heterooligomers with other family members and form filaments. Interacts with wdpcp.

The protein localises to the cytoplasm. It is found in the cytoskeleton. The protein resides in the spindle. It localises to the cleavage furrow. Its subcellular location is the midbody. The protein localises to the cell cortex. It is found in the cell projection. The protein resides in the cilium membrane. Functionally, filament-forming cytoskeletal GTPase. Required for normal organization of the actin cytoskeleton. Plays a role in the biogenesis of polarized columnar-shaped epithelium. Required for the progression through mitosis through regulation of chromosome congression. During anaphase, may be required for chromosome segregation and spindle elongation. Plays a role in ciliogenesis and collective cell movements including convergent extension during gastrulation. In cilia, required for the integrity of the diffusion barrier at the base of the primary cilium that prevents diffusion of transmembrane proteins between the cilia and plasma membranes. Controls cell shape and not polarization of cells during convergent extension. In Xenopus tropicalis (Western clawed frog), this protein is Septin-2B (sept2-B).